Consider the following 269-residue polypeptide: uncharacterized protein (269 aa).

8 helical membrane passes run 9-29, 50-70, 82-102, 107-127, 147-167, 173-193, 200-220, and 224-244; these read YIIGLVLALGVSFATLLAHLF, FMLGGYLLVEYLSFLLMIVPL, FSIIHTSIWYNVFVVFTVWAF, LYWTAFFSLCLFSSSFTMYGQ, LVFGKSLWFVVYAFSAALHCT, VFSNVFIWFFAAMYLVPILGF, LVSAYLFLSIGIGQMFIHLFA, and IFAFIIAGLMTLFAALLFLLP.

It localises to the membrane. This is an uncharacterized protein from Schizosaccharomyces pombe (strain 972 / ATCC 24843) (Fission yeast).